The sequence spans 66 residues: Early E3 7.7 kDa protein (66 aa).

Asparagine 7 and asparagine 24 each carry an N-linked (GlcNAc...) asparagine; by host glycan. The chain crosses the membrane as a helical span at residues 44–64 (ITILIVIGILILSVILYFLFS).

It is found in the host nucleus membrane. The sequence is that of Early E3 7.7 kDa protein from Human adenovirus B serotype 7 (HAdV-7).